The chain runs to 578 residues: Proline--tRNA ligase (578 aa).

Belongs to the class-II aminoacyl-tRNA synthetase family. ProS type 1 subfamily. As to quaternary structure, homodimer.

The protein resides in the cytoplasm. The catalysed reaction is tRNA(Pro) + L-proline + ATP = L-prolyl-tRNA(Pro) + AMP + diphosphate. In terms of biological role, catalyzes the attachment of proline to tRNA(Pro) in a two-step reaction: proline is first activated by ATP to form Pro-AMP and then transferred to the acceptor end of tRNA(Pro). As ProRS can inadvertently accommodate and process non-cognate amino acids such as alanine and cysteine, to avoid such errors it has two additional distinct editing activities against alanine. One activity is designated as 'pretransfer' editing and involves the tRNA(Pro)-independent hydrolysis of activated Ala-AMP. The other activity is designated 'posttransfer' editing and involves deacylation of mischarged Ala-tRNA(Pro). The misacylated Cys-tRNA(Pro) is not edited by ProRS. The chain is Proline--tRNA ligase from Burkholderia cenocepacia (strain HI2424).